The sequence spans 1178 residues: MFELNNFDALQIGLASPEKIREWSRGEVKKPETINYRTLKPERDGLFCERIFGPMKDWECHCGKYKRIRYKGIVCDRCGVEVTKAKVRRERMGHIELAAPVSHIWYFKGIPSRMGLILDMSPRALEKVLYFASYVVLDPKETPLLKKQLLNEKEYRESIDKYGDDSFVAAMGAEAVKTLLDEIDLEQSSIELKEELKTSTGQKKIRIIRRLEVVESFRKSGNRPDWMVIDVIPVIPPDLRPMVQLDGGRFATSDLNDLYRRVINRNNRLKKLLDLGAPDIIVRNEKRMLQEAVDALIDNGRRGRPVTGPGNRPLKSLSDMLKGKQGRFRQNLLGKRVDYSGRSVIVVGPELKMYQCGLPKEMALELFKPFVMKKLVQNGLAHNIKSAKRMVERVQPQVWDVLEEVISDHPVLLNRAPTLHRLGIQAFQPVLVEGRAIKLHPLVCTAYNADFDGDQMAVHVPLSVEAQAEARFLMLAAHNILKPSDGKPVSVPTQDMVLGSYYLTMDKDGVKGEGKVFSCPEEVLMAYQCKAVDIHAKIKVRLKRVVDGETIEGIIETTPGKIIFNESIPQDLGYIDRTIPENKLKLEVDFLVSKKTLGGIITRCYMKHGATKTSIMLDKIKAKGYHYSTIGAITISTSDMVVPEAKRELLENTEKQVEKIQKMYRRGFISEEERYEKVIDLWTKTTEDVANALMGSLDSFNPIYMMADSGARGSKSQIKQLAGMRGLMANPSGKIIELPIKASFREGLDVLEYFISTHGARKGNADTALKTADSGYLTRRLVDVSQDVIVRQEDCGTEEGYEVSEIKEGNEVIEPLVERLSGRYPSEDIIHPTTGEVIVKRNTYMNEDIAKKVSDAGIKKVKIRSVFTCKSKHGVCARCYGMNMATSQKIHIGEAVGIVAAQSIGEPGTQLTMRTFHTGGVAGADITQGLPRVEELFEARKPKGLAIVSEVSGTVKMEETKKKRTIIVVTDDGEEVSYDIPFGSRIKVKNGDIIAAGDEITEGSINPHDILRIKGVDGVKNYLLSEVQKVYRLQGVDINDKHLEVVIRQMTRKIKIEDSGDTELLPGTMIDVFDFEEANKEILEKGGEPAVGRIALLGITKAALATDSFLSAASFQETTRVLTDAAIKGKIDPLLGLKENVIIGKLIPAGTGMTRYRSIQINTDDENIEEDSIDSIEV.

Zn(2+)-binding residues include Cys60, Cys62, Cys75, and Cys78. Mg(2+) contacts are provided by Asp450, Asp452, and Asp454. Positions 795, 869, 876, and 879 each coordinate Zn(2+).

This sequence belongs to the RNA polymerase beta' chain family. As to quaternary structure, the RNAP catalytic core consists of 2 alpha, 1 beta, 1 beta' and 1 omega subunit. When a sigma factor is associated with the core the holoenzyme is formed, which can initiate transcription. The cofactor is Mg(2+). It depends on Zn(2+) as a cofactor.

The enzyme catalyses RNA(n) + a ribonucleoside 5'-triphosphate = RNA(n+1) + diphosphate. In terms of biological role, DNA-dependent RNA polymerase catalyzes the transcription of DNA into RNA using the four ribonucleoside triphosphates as substrates. This Clostridium botulinum (strain Loch Maree / Type A3) protein is DNA-directed RNA polymerase subunit beta'.